The primary structure comprises 134 residues: Large ribosomal subunit protein uL16 (134 aa).

The span at 1 to 20 (MLLQPKRTKFRKMHKGRNRG) shows a compositional bias: basic residues. The tract at residues 1-21 (MLLQPKRTKFRKMHKGRNRGT) is disordered.

The protein belongs to the universal ribosomal protein uL16 family. In terms of assembly, part of the 50S ribosomal subunit.

In terms of biological role, binds 23S rRNA and is also seen to make contacts with the A and possibly P site tRNAs. The polypeptide is Large ribosomal subunit protein uL16 (Blochmanniella pennsylvanica (strain BPEN)).